The following is a 478-amino-acid chain: Protein nucleotidyltransferase YdiU (478 aa).

ATP-binding residues include Gly-84, Gly-86, Arg-87, Lys-107, Asp-119, Gly-120, Arg-170, and Arg-177. Residue Asp-246 is the Proton acceptor of the active site. Residues Asn-247 and Asp-256 each contribute to the Mg(2+) site. Position 256 (Asp-256) interacts with ATP.

Belongs to the SELO family. It depends on Mg(2+) as a cofactor. Mn(2+) serves as cofactor.

It catalyses the reaction L-seryl-[protein] + ATP = 3-O-(5'-adenylyl)-L-seryl-[protein] + diphosphate. It carries out the reaction L-threonyl-[protein] + ATP = 3-O-(5'-adenylyl)-L-threonyl-[protein] + diphosphate. The catalysed reaction is L-tyrosyl-[protein] + ATP = O-(5'-adenylyl)-L-tyrosyl-[protein] + diphosphate. The enzyme catalyses L-histidyl-[protein] + UTP = N(tele)-(5'-uridylyl)-L-histidyl-[protein] + diphosphate. It catalyses the reaction L-seryl-[protein] + UTP = O-(5'-uridylyl)-L-seryl-[protein] + diphosphate. It carries out the reaction L-tyrosyl-[protein] + UTP = O-(5'-uridylyl)-L-tyrosyl-[protein] + diphosphate. In terms of biological role, nucleotidyltransferase involved in the post-translational modification of proteins. It can catalyze the addition of adenosine monophosphate (AMP) or uridine monophosphate (UMP) to a protein, resulting in modifications known as AMPylation and UMPylation. This Escherichia coli O7:K1 (strain IAI39 / ExPEC) protein is Protein nucleotidyltransferase YdiU.